A 273-amino-acid chain; its full sequence is Hemin import ATP-binding protein HmuV (273 aa).

One can recognise an ABC transporter domain in the interval 2-256; the sequence is LTAHHLDVAR…AHIAQCYGFA (255 aa). Residue 34–41 participates in ATP binding; the sequence is GRNGAGKS.

It belongs to the ABC transporter superfamily. Heme (hemin) importer (TC 3.A.1.14.5) family. As to quaternary structure, the complex is composed of two ATP-binding proteins (HmuV), two transmembrane proteins (HmuU) and a solute-binding protein (HmuT).

The protein resides in the cell inner membrane. Part of the ABC transporter complex HmuTUV involved in hemin import. Responsible for energy coupling to the transport system. The polypeptide is Hemin import ATP-binding protein HmuV (Burkholderia ambifaria (strain ATCC BAA-244 / DSM 16087 / CCUG 44356 / LMG 19182 / AMMD) (Burkholderia cepacia (strain AMMD))).